Here is a 376-residue protein sequence, read N- to C-terminus: Succinyl-diaminopimelate desuccinylase (376 aa).

Residue His67 participates in Zn(2+) binding. Residue Asp69 is part of the active site. Zn(2+) is bound at residue Asp100. Catalysis depends on Glu134, which acts as the Proton acceptor. Zn(2+)-binding residues include Glu135, Glu163, and His349.

The protein belongs to the peptidase M20A family. DapE subfamily. Homodimer. Zn(2+) is required as a cofactor. It depends on Co(2+) as a cofactor.

It catalyses the reaction N-succinyl-(2S,6S)-2,6-diaminopimelate + H2O = (2S,6S)-2,6-diaminopimelate + succinate. The protein operates within amino-acid biosynthesis; L-lysine biosynthesis via DAP pathway; LL-2,6-diaminopimelate from (S)-tetrahydrodipicolinate (succinylase route): step 3/3. Catalyzes the hydrolysis of N-succinyl-L,L-diaminopimelic acid (SDAP), forming succinate and LL-2,6-diaminopimelate (DAP), an intermediate involved in the bacterial biosynthesis of lysine and meso-diaminopimelic acid, an essential component of bacterial cell walls. This is Succinyl-diaminopimelate desuccinylase from Shewanella woodyi (strain ATCC 51908 / MS32).